The primary structure comprises 473 residues: MVLCCWLALVALIPMTLSINPGVKVRLTGKGLEYGRQLGMASIQQKLKTIKVPDISGKQRVSPIGKVKYSLSNMQIVDVGLPKSALDLVPGTGVKLSIGNAFLRMHGNWRVKYLRIIKDSGSFDLNVNDLTITTTIAIKSDETGRPVVSSVNCAATVGSAKIKFHGGASWLYNLFRKFVDKAIRNALQKQMCPLVANAVSDLNPQLKTLNVLAKVDQYAEIEYSMVSSPTVSNSCIDFSLKGEFYNIGKHQEPPFSPAAFSLPPQINNMLYISVSAFTINSAAFVYNTAGALSLYITDDMIPQASPIRLNTRTFGAFIPQVAKRFPGLMMKLLVKTAKNPVVTFEPNKVTVQATSTVTAYAIQPNTTLSPLFVLNLETSVSARVFVSGMRLAGAVTLNKMALTLGTSYVGEFQVRSLDSIFQVVLKVVVIPILNVQLAKGYPLPTLGKMKLVNTELQVLKDYMLIGTDVQFTG.

A signal peptide spans 1-18 (MVLCCWLALVALIPMTLS). Residues 19 to 29 (INPGVKVRLTG) form a central sheet, part 1 region. An N-terminal barrel region spans residues 28–209 (TGKGLEYGRQ…SDLNPQLKTL (182 aa)). Cysteine 153 and cysteine 192 form a disulfide bridge. The central sheet, part 2 stretch occupies residues 211–275 (VLAKVDQYAE…INNMLYISVS (65 aa)). The interval 225-230 (MVSSPT) is cleavage sites for elastase. Residues 276–446 (AFTINSAAFV…LAKGYPLPTL (171 aa)) are C-terminal barrel. An N-linked (GlcNAc...) asparagine glycan is attached at asparagine 365. The central sheet, part 3 stretch occupies residues 453-472 (NTELQVLKDYMLIGTDVQFT).

The protein belongs to the BPI/LBP/Plunc superfamily. BPI/LBP family. In terms of assembly, monomer. Homodimer; disulfide-linked. In terms of tissue distribution, expressed in spleen. Lower expression in gill, head kidney, entire kidney, skin, intestine and blood and lowest expression in liver and muscle.

It localises to the secreted. Functionally, the cytotoxic action of BPI is limited to many species of Gram-negative bacteria; this specificity may be explained by a strong affinity of the very basic N-terminal half for the negatively charged lipopolysaccharides that are unique to the Gram-negative bacterial outer envelope. Exhibits neutralizing capacity towards P.aeruginosa lipopolysaccharides (LPS) and has bactericidal activity against multiple drug resistant (MDR) P.aeruginosa strains derived from people with cystic fibrosis. Has antibacterial activity against E.coli, but not against S.iniae. This Sebastes schlegelii (Korean rockfish) protein is Bactericidal permeability-increasing protein.